Here is a 363-residue protein sequence, read N- to C-terminus: MVSYLFVLGALASVAIASPVPELKARASCTFTDAASAIKGKASCTTIVLNNIAVPAGTTLDMTGLKSGTHVSFSGKTTFGYKEWEGPLISFSGSNVVIDGASGHSIDCQGSRWWDSKGGNGGKTKPKFFYAHSLKDSTIRGLHTLNTPVQAFSINGAANLGVYDVSVDNSAGDSAGGHNTDAFDVGSSTGVYISGADVKNQDDCLAVNSGTNITFTGGTCSGGHGLSIGSVGGRKDNVVKSVSITNSKIINSDNGVRIKTVAGATGPVSDITYSGITLSNIAKYGIVIEQDYENGSPTGKPTSGVPISGLTLSKISGSVSSSATPVYILCASCTNWKWSGVSVTGGKKSSKCTGIPSGSGAAC.

The first 17 residues, 1-17 (MVSYLFVLGALASVAIA), serve as a signal peptide directing secretion. Positions 18–26 (SPVPELKAR) are excised as a propeptide. Cys-29 and Cys-44 are disulfide-bonded. PbH1 repeat units lie at residues 188–209 (STGV…AVNS), 210–230 (GTNI…SIGS), 239–260 (VKSV…RIKT), and 268–290 (VSDI…VIEQ). Residue Asp-202 is the Proton donor of the active site. A disulfide bridge connects residues Cys-204 and Cys-220. A glycan (N-linked (GlcNAc...) asparagine) is linked at Asn-212. Residue His-224 is part of the active site. 2 cysteine pairs are disulfide-bonded: Cys-330/Cys-333 and Cys-352/Cys-363.

Belongs to the glycosyl hydrolase 28 family.

It localises to the secreted. The catalysed reaction is (1,4-alpha-D-galacturonosyl)n+m + H2O = (1,4-alpha-D-galacturonosyl)n + (1,4-alpha-D-galacturonosyl)m.. In terms of biological role, involved in maceration and soft-rotting of plant tissue. Hydrolyzes the 1,4-alpha glycosidic bonds of de-esterified pectate in the smooth region of the plant cell wall. In Colletotrichum lindemuthianum (Bean anthracnose fungus), this protein is Endopolygalacturonase 1 (PG1).